We begin with the raw amino-acid sequence, 333 residues long: T-cell surface glycoprotein CD1c (333 aa).

The signal sequence occupies residues 1-17 (MLFLQFLLLALLLPGGD). The Extracellular segment spans residues 18–302 (NADASQEHVS…ILYWGHHFSM (285 aa)). Asparagine 38, asparagine 70, asparagine 75, and asparagine 146 each carry an N-linked (GlcNAc...) asparagine glycan. 2 cysteine pairs are disulfide-bonded: cysteine 120–cysteine 185 and cysteine 225–cysteine 280. One can recognise an Ig-like domain in the interval 206–296 (PEAWLSSRPS…LGGQDIILYW (91 aa)). Residues 303–323 (NWIALVVIVPLVILIVLVLWF) traverse the membrane as a helical segment. Residues 324-333 (KKHCSYQDIL) are Cytoplasmic-facing. Positions 329 to 332 (YQDI) match the Internalization signal motif.

As to quaternary structure, heterodimer with B2M (beta-2-microglobulin). As to expression, expressed on cortical thymocytes, on certain T-cell leukemias, and in various other tissues.

It is found in the cell membrane. The protein resides in the endosome membrane. Its subcellular location is the lysosome. Its function is as follows. Antigen-presenting protein that binds self and non-self lipid and glycolipid antigens and presents them to T-cell receptors on natural killer T-cells. In Homo sapiens (Human), this protein is T-cell surface glycoprotein CD1c (CD1C).